The chain runs to 239 residues: MVGLTTLFWLGAIGMLVGTLAFAWAGRDAGSGERRYYVTLVGISGIAAVAYVVMALGVGWVPVAERTVFAPRYIDWILTTPLIVYFLGLLAGLDSREFGIVITLNTVVMLAGFAGAMVPGIERYALFGMGAVAFLGLVYYLVGPMTESASQRSSGIKSLYVRLRNLTVILWAIYPFIWLLGPPGVALLTPTVDVALIVYLDLVTKVGFGFIALDAAATLRAEHGESLAGVDTDAPAVAD.

Residues 1 to 3 (MVG) are Extracellular-facing. A helical transmembrane segment spans residues 4-25 (LTTLFWLGAIGMLVGTLAFAWA). Topologically, residues 26-33 (GRDAGSGE) are cytoplasmic. A helical transmembrane segment spans residues 34–55 (RRYYVTLVGISGIAAVAYVVMA). The Extracellular portion of the chain corresponds to 56–69 (LGVGWVPVAERTVF). A helical membrane pass occupies residues 70–91 (APRYIDWILTTPLIVYFLGLLA). Residues 92–94 (GLD) lie on the Cytoplasmic side of the membrane. A helical transmembrane segment spans residues 95–117 (SREFGIVITLNTVVMLAGFAGAM). Topologically, residues 118-121 (VPGI) are extracellular. A helical transmembrane segment spans residues 122–149 (ERYALFGMGAVAFLGLVYYLVGPMTESA). Topologically, residues 150 to 153 (SQRS) are cytoplasmic. The helical transmembrane segment at 154 to 181 (SGIKSLYVRLRNLTVILWAIYPFIWLLG) threads the bilayer. Topologically, residues 182 to 189 (PPGVALLT) are extracellular. Residues 190 to 222 (PTVDVALIVYLDLVTKVGFGFIALDAAATLRAE) form a helical membrane-spanning segment. K205 is modified (N6-(retinylidene)lysine). Over 223–239 (HGESLAGVDTDAPAVAD) the chain is Cytoplasmic.

This sequence belongs to the archaeal/bacterial/fungal opsin family. As to quaternary structure, homodimer. Interacts with HTR-II.

It is found in the cell membrane. Functionally, photophobic photoreceptor responsible for the negative phototaxis. Activates the sensory rhodopsin II transducer (HTR-II) in response to blue light. This Natronomonas pharaonis (Natronobacterium pharaonis) protein is Sensory rhodopsin-2 (sop2).